Consider the following 215-residue polypeptide: Translation initiation factor 6 (215 aa).

Belongs to the eIF-6 family.

Its function is as follows. Binds to the 50S ribosomal subunit and prevents its association with the 30S ribosomal subunit to form the 70S initiation complex. The chain is Translation initiation factor 6 from Archaeoglobus fulgidus (strain ATCC 49558 / DSM 4304 / JCM 9628 / NBRC 100126 / VC-16).